Here is a 281-residue protein sequence, read N- to C-terminus: Large ribosomal subunit protein uL2 (281 aa).

Basic and acidic residues predominate over residues 27–38 (DSPEKSLTEPLK). Disordered regions lie at residues 27-59 (DSPE…GGHK) and 225-281 (AMNP…ARSQ). Residues 45–59 (VHGHITRRHQGGGHK) are compositionally biased toward basic residues.

Belongs to the universal ribosomal protein uL2 family. As to quaternary structure, part of the 50S ribosomal subunit. Forms a bridge to the 30S subunit in the 70S ribosome.

In terms of biological role, one of the primary rRNA binding proteins. Required for association of the 30S and 50S subunits to form the 70S ribosome, for tRNA binding and peptide bond formation. It has been suggested to have peptidyltransferase activity; this is somewhat controversial. Makes several contacts with the 16S rRNA in the 70S ribosome. This Myxococcus xanthus (strain DK1622) protein is Large ribosomal subunit protein uL2.